The chain runs to 970 residues: Protein translocase subunit SecA (970 aa).

Residues Q99, 117-121, and D631 contribute to the ATP site; that span reads GEGKT.

It belongs to the SecA family. In terms of assembly, monomer and homodimer. Part of the essential Sec protein translocation apparatus which comprises SecA, SecYEG and auxiliary proteins SecDF. Other proteins may also be involved.

Its subcellular location is the cell inner membrane. The protein resides in the cytoplasm. The catalysed reaction is ATP + H2O + cellular proteinSide 1 = ADP + phosphate + cellular proteinSide 2.. Part of the Sec protein translocase complex. Interacts with the SecYEG preprotein conducting channel. Has a central role in coupling the hydrolysis of ATP to the transfer of proteins into and across the cell membrane, serving as an ATP-driven molecular motor driving the stepwise translocation of polypeptide chains across the membrane. This Chlamydia caviae (strain ATCC VR-813 / DSM 19441 / 03DC25 / GPIC) (Chlamydophila caviae) protein is Protein translocase subunit SecA.